The primary structure comprises 179 residues: Transcriptional repressor NrdR (179 aa).

The segment at 3–34 (CPYCQHTNSRVLESRSSEGGQSIRRRRECLCC) is a zinc-finger region. In terms of domain architecture, ATP-cone spans 49-139 (ITVIKHDGKK…VYGRFQGIKD (91 aa)). Residues 160–179 (KPANDDFSEQETPSTVMMPS) are disordered. Positions 169-179 (QETPSTVMMPS) are enriched in polar residues.

This sequence belongs to the NrdR family. It depends on Zn(2+) as a cofactor.

Functionally, negatively regulates transcription of bacterial ribonucleotide reductase nrd genes and operons by binding to NrdR-boxes. This Rippkaea orientalis (strain PCC 8801 / RF-1) (Cyanothece sp. (strain PCC 8801)) protein is Transcriptional repressor NrdR.